Here is a 199-residue protein sequence, read N- to C-terminus: Peptidyl-tRNA hydrolase (199 aa).

TRNA is bound at residue tyrosine 18. Histidine 23 serves as the catalytic Proton acceptor. TRNA contacts are provided by tyrosine 69, asparagine 71, and asparagine 117.

This sequence belongs to the PTH family. Monomer.

The protein localises to the cytoplasm. It carries out the reaction an N-acyl-L-alpha-aminoacyl-tRNA + H2O = an N-acyl-L-amino acid + a tRNA + H(+). Hydrolyzes ribosome-free peptidyl-tRNAs (with 1 or more amino acids incorporated), which drop off the ribosome during protein synthesis, or as a result of ribosome stalling. In terms of biological role, catalyzes the release of premature peptidyl moieties from peptidyl-tRNA molecules trapped in stalled 50S ribosomal subunits, and thus maintains levels of free tRNAs and 50S ribosomes. This chain is Peptidyl-tRNA hydrolase, found in Prochlorococcus marinus (strain MIT 9515).